We begin with the raw amino-acid sequence, 60 residues long: Conotoxin VnMRCL-012 (60 aa).

Positions 1 to 22 (MRCLPVFVILLLLIASAPGVDA) are cleaved as a signal peptide. Residues 23–50 (QPKTKYDVPLASRHDFAKKTPKRLSKPR) constitute a propeptide that is removed on maturation.

The protein belongs to the conotoxin T superfamily. In terms of processing, contains 2 disulfide bonds that can be either 'C1-C3, C2-C4' or 'C1-C4, C2-C3', since these disulfide connectivities have been observed for conotoxins with cysteine framework V (for examples, see AC P0DQQ7 and AC P81755). In terms of tissue distribution, expressed by the venom duct.

It is found in the secreted. The chain is Conotoxin VnMRCL-012 from Conus ventricosus (Mediterranean cone).